We begin with the raw amino-acid sequence, 485 residues long: Glutamyl-tRNA(Gln) amidotransferase subunit A (485 aa).

Active-site charge relay system residues include lysine 80 and serine 155. Catalysis depends on serine 179, which acts as the Acyl-ester intermediate.

Belongs to the amidase family. GatA subfamily. As to quaternary structure, heterotrimer of A, B and C subunits.

The catalysed reaction is L-glutamyl-tRNA(Gln) + L-glutamine + ATP + H2O = L-glutaminyl-tRNA(Gln) + L-glutamate + ADP + phosphate + H(+). In terms of biological role, allows the formation of correctly charged Gln-tRNA(Gln) through the transamidation of misacylated Glu-tRNA(Gln) in organisms which lack glutaminyl-tRNA synthetase. The reaction takes place in the presence of glutamine and ATP through an activated gamma-phospho-Glu-tRNA(Gln). In Leptospira borgpetersenii serovar Hardjo-bovis (strain L550), this protein is Glutamyl-tRNA(Gln) amidotransferase subunit A.